The sequence spans 465 residues: Probable Xaa-Pro aminopeptidase pepP (465 aa).

Residues D263, D274, E397, and E437 each contribute to the Mn(2+) site.

It belongs to the peptidase M24B family. The cofactor is Mn(2+).

The enzyme catalyses Release of any N-terminal amino acid, including proline, that is linked to proline, even from a dipeptide or tripeptide.. In terms of biological role, catalyzes the removal of a penultimate prolyl residue from the N-termini of peptides. The chain is Probable Xaa-Pro aminopeptidase pepP (pepP) from Emericella nidulans (strain FGSC A4 / ATCC 38163 / CBS 112.46 / NRRL 194 / M139) (Aspergillus nidulans).